The sequence spans 585 residues: Serine protease HtrA-like (585 aa).

The segment at 1-184 (MDNNKKQVIP…QPKDKDNDNT (184 aa)) is disordered. Over residues 21-82 (YFHNVEREER…IHQQRDDKSY (62 aa)) the composition is skewed to basic and acidic residues. Residues 84–94 (QKTLNQNNQMN) show a composition bias toward polar residues. A compositionally biased stretch (basic and acidic residues) spans 95-113 (KSKDDDNKIGEESLHDVRV). Over residues 114-124 (SSDTSTLPHQN) the composition is skewed to polar residues. Positions 126–139 (SIKDYDDSGNESKQ) are enriched in basic and acidic residues. Residues 151-175 (GVNSNHTEQDSRSTQPYSSKHSYSQ) are compositionally biased toward polar residues. A helical transmembrane segment spans residues 224–244 (MLIIIGIIVLLLILNAIFTTV). Catalysis depends on charge relay system residues H320, D350, and S435. The PDZ domain maps to 516–575 (GVLIGEVKENGLGDKAGLKKGDVIVELDGKKIEDNLRYRQVIYSHYDDQKTITAKIYRNG).

It belongs to the peptidase S1C family.

The protein localises to the cell membrane. This is Serine protease HtrA-like from Staphylococcus epidermidis (strain ATCC 35984 / DSM 28319 / BCRC 17069 / CCUG 31568 / BM 3577 / RP62A).